A 401-amino-acid chain; its full sequence is MDPEVSKLLATVTSLGETVKKHASTDKESPASRESRRELLSAARQLTNELQNEGQIVEGYLYGTIDPLLLKMGIDLGIFRKLVDSSTPVTLGELMSVSGADEVLLARIMRGLSSIHAVREVGVELYEPNKVTRAFTTVKGQSGLDVFHNINHPGWQSLPECLRATGYRNPTDPAKMWFGRQFNGEPYFDWLGKRPELLSSFHRFMSTQRDGHAHWLDFYPFQQQLLPDFDAGDPDAVFMVDVGGSVGHEIQEVKRRYPGIPGRMVLQDVPATIARVDPENGMEAMAHDFFTPNPIKGARAYYLRNVLHDWDDDRCCVILKHIRDAMTPGYSVLLINEFSIPRKGACSFATHSDFMLMAINAAVERTEQQWYHLMKSVGLQIKKIWTLEPDTESLLEVTRVD.

Asp268 contributes to the S-adenosyl-L-methionine binding site. His308 serves as the catalytic Proton acceptor.

This sequence belongs to the class I-like SAM-binding methyltransferase superfamily. Cation-independent O-methyltransferase family.

It participates in secondary metabolite biosynthesis; flavonoid biosynthesis. Methyltransferase; part of the gene cluster that mediates the biosynthesis of chlorflavonin, a fungal flavonoid with acetolactate synthase inhibitory activity. Within the pathway, cfoC is responsible for the methylation at position C8-OH of flavonoid. The pathway begins with the PKS-NRPS hybrid synthetase cfoA that uses benzoic acid or p-hydroxybenzoic acid as a starter unit with four rounds of chain elongation using malonyl-CoA to form the chalcone skeleton. Then, a new type of chalcone isomerase, cfoK, catalyzes the conversion of the chalcone into a flavanone by a histidine-mediated oxa-Michael addition mechanism. The desaturation of flavanone to flavone is catalyzed by a new type of flavone synthase, the flavin mononucleotide (FMN)-dependent oxidoreductase cfoJ. Monooxygenases cfoF, cfoG, and P450 cfoH are responsible for the hydroxylation of the flavonoid skeleton at sites C3, C8, and C2', respectively. Like cfoF, the dehydratase cfoI also plays a role in the hydroxylation of position C3. Methyltransferases cfoB, cfoC, and cfoD then catalyze the methylation of C7-OH, C8-OH, and C3-OH, respectively. Finally, the monooxygenase cfoE is responsible for the chlorination of flavonoid at position C3'. The sequence is that of Methyltransferase cfoC from Aspergillus candidus.